The following is an 807-amino-acid chain: Poly-beta-1,6-N-acetyl-D-glucosamine export protein (807 aa).

Positions 1-26 (MYSSSRKRCPKTKWALKLLTAAFLAA) are cleaved as a signal peptide. TPR repeat units follow at residues 98-131 (ARGY…EPQN), 165-198 (KANL…NAST), and 279-311 (RIQV…GQII).

The protein localises to the cell outer membrane. Its function is as follows. Exports the biofilm adhesin polysaccharide poly-beta-1,6-N-acetyl-D-glucosamine (PGA) across the outer membrane. The PGA transported seems to be partially N-deacetylated since N-deacetylation of PGA by PgaB is needed for PGA export through the PgaA porin. This Escherichia coli O157:H7 protein is Poly-beta-1,6-N-acetyl-D-glucosamine export protein (pgaA).